The following is a 432-amino-acid chain: Trigger factor (432 aa).

The PPIase FKBP-type domain occupies 161 to 246 (EDRVTIDFTG…LKKVEERGLP (86 aa)).

The protein belongs to the FKBP-type PPIase family. Tig subfamily.

It localises to the cytoplasm. The enzyme catalyses [protein]-peptidylproline (omega=180) = [protein]-peptidylproline (omega=0). Involved in protein export. Acts as a chaperone by maintaining the newly synthesized protein in an open conformation. Functions as a peptidyl-prolyl cis-trans isomerase. The chain is Trigger factor from Salmonella choleraesuis (strain SC-B67).